Reading from the N-terminus, the 111-residue chain is UPF0145 protein BMA10229_A0446 (111 aa).

It belongs to the UPF0145 family.

The protein is UPF0145 protein BMA10229_A0446 of Burkholderia mallei (strain NCTC 10229).